The sequence spans 417 residues: MSSKYPRSVRRCLPLCALTLEAALILLFYFFTHYDASLEDQKGLVASYQVGQDLTVMAALGLGFLTSNFRRHSWSSVAFNLFMLALGVQWAILLDGFLSQFPPGKVVITLFSIRLATMSAMSVLISAGAVLGKVNLAQLVVMVLVEVTALGTLRMVISNIFNTDYHMNLRHFYVFAAYFGLTVAWCLPKPLPKGTEDNDQRATIPSLSAMLGALFLWMFWPSVNSALLRSPIQRKNAMFNTYYALAVSVVTAISGSSLAHPQRKISMTYVHSAVLAGGVAVGTSCHLIPSPWLAMVLGLVAGLISIGGAKCLPVCCNRVLGIHHISVMHSIFSLLGLLGEITYIVLLVLHTVWNGNGMIGFQVLLSIGELSLAIVIALTSGLLTGLLLNLKIWKAPHVAKYFDDQVFWKFPHLAVGF.

11 helical membrane-spanning segments follow: residues C12–T32, L44–F64, V77–F97, I125–V145, F172–P192, T203–V223, M238–L258, I265–C285, L287–G307, I331–T351, and M358–L378.

The protein belongs to the ammonium transporter (TC 2.A.49) family. Rh subfamily. In terms of assembly, heterotrimer; a RHCE monomer interacts with a RHAG homodimer. Component of the ankyrin-1 complex in the erythrocyte, composed of ANK1, RHCE, RHAG, SLC4A1, EPB42, GYPA, GYPB and AQP1. Interacts (via the N- and C-terminal) with ANK1 (via ANk 1-5 repeats); mediates the primary membrane attachment site for ANK1. As to expression, restricted to tissues or cell lines expressing erythroid characters. Isoform 4g and isoform RhPI-Alpha are expressed in immature erythroblasts but not in mature erythroblasts.

Its subcellular location is the membrane. Functionally, component of the ankyrin-1 complex, a multiprotein complex involved in the stability and shape of the erythrocyte membrane. Mediates the primary membrane attachment site for ANK1 when associated with RHAG. May participate in the ammonium and carbon dioxide transport through the heterotrimer form. The polypeptide is Blood group Rh(CE) polypeptide (Homo sapiens (Human)).